The sequence spans 342 residues: Anthranilate phosphoribosyltransferase (342 aa).

5-phospho-alpha-D-ribose 1-diphosphate-binding positions include G81, 84–85 (GD), T89, 91–94 (NIST), 109–117 (KHGNRALSS), and T121. G81 is a binding site for anthranilate. Position 93 (S93) interacts with Mg(2+). N112 serves as a coordination point for anthranilate. An anthranilate-binding site is contributed by R167. Positions 225 and 226 each coordinate Mg(2+).

It belongs to the anthranilate phosphoribosyltransferase family. As to quaternary structure, homodimer. Requires Mg(2+) as cofactor.

The catalysed reaction is N-(5-phospho-beta-D-ribosyl)anthranilate + diphosphate = 5-phospho-alpha-D-ribose 1-diphosphate + anthranilate. It participates in amino-acid biosynthesis; L-tryptophan biosynthesis; L-tryptophan from chorismate: step 2/5. Functionally, catalyzes the transfer of the phosphoribosyl group of 5-phosphorylribose-1-pyrophosphate (PRPP) to anthranilate to yield N-(5'-phosphoribosyl)-anthranilate (PRA). The protein is Anthranilate phosphoribosyltransferase of Agrobacterium fabrum (strain C58 / ATCC 33970) (Agrobacterium tumefaciens (strain C58)).